The following is an 886-amino-acid chain: Leucine--tRNA ligase (886 aa).

The short motif at 51–61 (PYPSGRIHMGH) is the 'HIGH' region element. The 'KMSKS' region signature appears at 644–648 (KMSKS). Lys647 provides a ligand contact to ATP.

It belongs to the class-I aminoacyl-tRNA synthetase family.

The protein resides in the cytoplasm. The catalysed reaction is tRNA(Leu) + L-leucine + ATP = L-leucyl-tRNA(Leu) + AMP + diphosphate. The sequence is that of Leucine--tRNA ligase from Bartonella tribocorum (strain CIP 105476 / IBS 506).